A 446-amino-acid chain; its full sequence is tRNA modification GTPase MnmE (446 aa).

(6S)-5-formyl-5,6,7,8-tetrahydrofolate-binding residues include R24, E81, and K120. Residues 216–368 (GLHAVLIGPP…LHIRLRELAL (153 aa)) form the TrmE-type G domain. N226 contributes to the K(+) binding site. GTP is bound by residues 226–231 (NAGKSS), 245–251 (TDVAGTT), and 270–273 (DTAG). S230 contributes to the Mg(2+) binding site. K(+) is bound by residues T245, V247, and T250. Position 251 (T251) interacts with Mg(2+). K446 lines the (6S)-5-formyl-5,6,7,8-tetrahydrofolate pocket.

The protein belongs to the TRAFAC class TrmE-Era-EngA-EngB-Septin-like GTPase superfamily. TrmE GTPase family. Homodimer. Heterotetramer of two MnmE and two MnmG subunits. It depends on K(+) as a cofactor.

The protein localises to the cytoplasm. In terms of biological role, exhibits a very high intrinsic GTPase hydrolysis rate. Involved in the addition of a carboxymethylaminomethyl (cmnm) group at the wobble position (U34) of certain tRNAs, forming tRNA-cmnm(5)s(2)U34. This chain is tRNA modification GTPase MnmE, found in Xanthomonas oryzae pv. oryzae (strain KACC10331 / KXO85).